The chain runs to 172 residues: Nicotinamide-nucleotide adenylyltransferase (172 aa).

It belongs to the archaeal NMN adenylyltransferase family.

The protein resides in the cytoplasm. It catalyses the reaction beta-nicotinamide D-ribonucleotide + ATP + H(+) = diphosphate + NAD(+). The protein operates within cofactor biosynthesis; NAD(+) biosynthesis; NAD(+) from nicotinamide D-ribonucleotide: step 1/1. This is Nicotinamide-nucleotide adenylyltransferase from Aeropyrum pernix (strain ATCC 700893 / DSM 11879 / JCM 9820 / NBRC 100138 / K1).